A 491-amino-acid chain; its full sequence is Probable glycine dehydrogenase (decarboxylating) subunit 2 (491 aa).

An N6-(pyridoxal phosphate)lysine modification is found at K273.

The protein belongs to the GcvP family. C-terminal subunit subfamily. As to quaternary structure, the glycine cleavage system is composed of four proteins: P, T, L and H. In this organism, the P 'protein' is a heterodimer of two subunits. Requires pyridoxal 5'-phosphate as cofactor.

It catalyses the reaction N(6)-[(R)-lipoyl]-L-lysyl-[glycine-cleavage complex H protein] + glycine + H(+) = N(6)-[(R)-S(8)-aminomethyldihydrolipoyl]-L-lysyl-[glycine-cleavage complex H protein] + CO2. In terms of biological role, the glycine cleavage system catalyzes the degradation of glycine. The P protein binds the alpha-amino group of glycine through its pyridoxal phosphate cofactor; CO(2) is released and the remaining methylamine moiety is then transferred to the lipoamide cofactor of the H protein. This chain is Probable glycine dehydrogenase (decarboxylating) subunit 2, found in Bacillus cereus (strain AH187).